A 334-amino-acid polypeptide reads, in one-letter code: Holliday junction branch migration complex subunit RuvB (334 aa).

The tract at residues 1 to 182 (MNERMVDQSM…FGVHLRLEYY (182 aa)) is large ATPase domain (RuvB-L). Residues Leu-21, Arg-22, Gly-63, Lys-66, Thr-67, Thr-68, 129–131 (EDF), Arg-172, Tyr-182, and Arg-219 contribute to the ATP site. Position 67 (Thr-67) interacts with Mg(2+). Residues 183 to 253 (NESDLKEIII…TTKHALGLLQ (71 aa)) are small ATPAse domain (RuvB-S). Residues 256-334 (QHGLDYIDHK…HFAKSNEERE (79 aa)) form a head domain (RuvB-H) region. Positions 292, 311, and 316 each coordinate DNA.

It belongs to the RuvB family. As to quaternary structure, homohexamer. Forms an RuvA(8)-RuvB(12)-Holliday junction (HJ) complex. HJ DNA is sandwiched between 2 RuvA tetramers; dsDNA enters through RuvA and exits via RuvB. An RuvB hexamer assembles on each DNA strand where it exits the tetramer. Each RuvB hexamer is contacted by two RuvA subunits (via domain III) on 2 adjacent RuvB subunits; this complex drives branch migration. In the full resolvosome a probable DNA-RuvA(4)-RuvB(12)-RuvC(2) complex forms which resolves the HJ.

Its subcellular location is the cytoplasm. The enzyme catalyses ATP + H2O = ADP + phosphate + H(+). Its function is as follows. The RuvA-RuvB-RuvC complex processes Holliday junction (HJ) DNA during genetic recombination and DNA repair, while the RuvA-RuvB complex plays an important role in the rescue of blocked DNA replication forks via replication fork reversal (RFR). RuvA specifically binds to HJ cruciform DNA, conferring on it an open structure. The RuvB hexamer acts as an ATP-dependent pump, pulling dsDNA into and through the RuvAB complex. RuvB forms 2 homohexamers on either side of HJ DNA bound by 1 or 2 RuvA tetramers; 4 subunits per hexamer contact DNA at a time. Coordinated motions by a converter formed by DNA-disengaged RuvB subunits stimulates ATP hydrolysis and nucleotide exchange. Immobilization of the converter enables RuvB to convert the ATP-contained energy into a lever motion, pulling 2 nucleotides of DNA out of the RuvA tetramer per ATP hydrolyzed, thus driving DNA branch migration. The RuvB motors rotate together with the DNA substrate, which together with the progressing nucleotide cycle form the mechanistic basis for DNA recombination by continuous HJ branch migration. Branch migration allows RuvC to scan DNA until it finds its consensus sequence, where it cleaves and resolves cruciform DNA. The sequence is that of Holliday junction branch migration complex subunit RuvB from Staphylococcus aureus (strain bovine RF122 / ET3-1).